Consider the following 183-residue polypeptide: Dual-action ribosomal maturation protein DarP (183 aa).

The segment at 1-23 (MTKQPDDWLDEVPDNENDDDDDE) is disordered. Residues 7 to 23 (DWLDEVPDNENDDDDDE) show a composition bias toward acidic residues.

Belongs to the DarP family.

It is found in the cytoplasm. Member of a network of 50S ribosomal subunit biogenesis factors which assembles along the 30S-50S interface, preventing incorrect 23S rRNA structures from forming. Promotes peptidyl transferase center (PTC) maturation. The chain is Dual-action ribosomal maturation protein DarP from Cronobacter sakazakii (strain ATCC BAA-894) (Enterobacter sakazakii).